The chain runs to 940 residues: Mitogen-activated protein kinase kinase kinase 10 (940 aa).

Positions 16–81 constitute an SH3 domain; the sequence is PAGPVWTAVF…PSNYVAPAAP (66 aa). The Protein kinase domain occupies 98 to 360; that stretch reads LQLEEIIGVG…GSILKQLEVI (263 aa). ATP is bound by residues 104–112 and Lys-125; that span reads IGVGGFGKV. The active-site Proton acceptor is the Asp-222. The residue at position 258 (Thr-258) is a Phosphothreonine; by autocatalysis. The residue at position 262 (Ser-262) is a Phosphoserine; by autocatalysis and MAP4K1. 2 leucine-zipper regions span residues 384–405 and 419–440; these read IQHM…EEEL and LRRR…ELHL. Disordered regions lie at residues 490–599, 687–734, and 749–917; these read PTLD…MAPG, RAGD…GLAP, and STRS…QPTL. A phosphoserine mark is found at Ser-498, Ser-502, and Ser-506. Positions 501–511 are enriched in low complexity; it reads ASPPASPSIIP. The residue at position 552 (Thr-552) is a Phosphothreonine. Basic and acidic residues-rich tracts occupy residues 560-572 and 687-698; these read QKER…RLKA and RAGDGEEQRRWL. Residues 765–775 show a composition bias toward pro residues; it reads APSPPPSPLAP. A compositionally biased stretch (basic and acidic residues) spans 822–840; the sequence is LRQREPLELTNHGPRDPLD. An Omega-N-methylarginine modification is found at Arg-843. Residues 899–913 are compositionally biased toward pro residues; it reads PSRPDTPESPGPPSV.

Belongs to the protein kinase superfamily. STE Ser/Thr protein kinase family. MAP kinase kinase kinase subfamily. In terms of assembly, homodimer. Interacts with SH3RF2. Requires Mg(2+) as cofactor. In terms of processing, autophosphorylation on serine and threonine residues within the activation loop plays a role in enzyme activation.

It carries out the reaction L-seryl-[protein] + ATP = O-phospho-L-seryl-[protein] + ADP + H(+). It catalyses the reaction L-threonyl-[protein] + ATP = O-phospho-L-threonyl-[protein] + ADP + H(+). With respect to regulation, homodimerization via the leucine zipper domains is required for autophosphorylation and subsequent activation. In terms of biological role, activates the JUN N-terminal pathway. This chain is Mitogen-activated protein kinase kinase kinase 10 (Map3k10), found in Mus musculus (Mouse).